Here is a 302-residue protein sequence, read N- to C-terminus: Acetylxylan esterase (302 aa).

The N-terminal stretch at 1 to 20 (MPSVKETLTLLLSQAFLATG) is a signal peptide. A propeptide spanning residues 21 to 31 (SPVDGETVVKR) is cleaved from the precursor. At Gln-32 the chain carries Pyrrolidone carboxylic acid. An N-linked (GlcNAc...) asparagine glycan is attached at Asn-94. Residue Ser-121 is part of the active site. The interval 236-273 (QLSSGGSQPPGGGPTSTSRPTSTRTGSSPGPTQTHWGQ) is disordered. Residues 244–266 (PPGGGPTSTSRPTSTRTGSSPGP) are linker. Positions 250 to 269 (TSTSRPTSTRTGSSPGPTQT) are enriched in low complexity. One can recognise a CBM1 domain in the interval 266 to 302 (PTQTHWGQCGGQGWTGPTQCESGTTCQVISQWYSQCL). 2 cysteine pairs are disulfide-bonded: Cys-274/Cys-291 and Cys-285/Cys-301.

It belongs to the cutinase family. Acetylxylan esterase subfamily. Monomer. Glycosylated.

The protein resides in the secreted. It carries out the reaction Deacetylation of xylans and xylo-oligosaccharides.. It functions in the pathway glycan degradation; xylan degradation. Its activity is regulated as follows. Inhibited by phenylmethylsulfonyl flouride. Degrades acetylated xylans by cleaving acetyl side groups from the hetero-xylan backbone. In Hypocrea jecorina (Trichoderma reesei), this protein is Acetylxylan esterase (axe1).